We begin with the raw amino-acid sequence, 261 residues long: Cytochrome c oxidase subunit 3 (261 aa).

At 1-15 the chain is on the mitochondrial matrix side; the sequence is MTHQTHAYHMVNPSP. Residues 16 to 34 traverse the membrane as a helical segment; sequence WPLTGALSALLMTSGLVMW. Residues 35 to 40 are Mitochondrial intermembrane-facing; the sequence is FHYHST. A helical transmembrane segment spans residues 41–66; the sequence is ILVLLGLLTNILTMYQWWRDVVREGT. The Mitochondrial matrix portion of the chain corresponds to 67-72; it reads FQGHHT. Residues 73–105 form a helical membrane-spanning segment; the sequence is PTVQKGLRYGMVLFIISEVFFFAGFFWAFYHSS. Over 106-128 the chain is Mitochondrial intermembrane; it reads LAPTPELGGCWPPTGIHPLDPME. The chain crosses the membrane as a helical span at residues 129-152; that stretch reads VPLLNTSVLLASGVTITWAHHSLM. The Mitochondrial matrix portion of the chain corresponds to 153–155; that stretch reads EGN. A helical membrane pass occupies residues 156–183; that stretch reads RKQMLQALFITISLGIYFTLLQASEYHE. The Mitochondrial intermembrane portion of the chain corresponds to 184–190; the sequence is ASFSISD. A helical transmembrane segment spans residues 191–223; it reads GIYGSTFFMATGFHGLHVIIGSTFLAVCFLRQL. Over 224-232 the chain is Mitochondrial matrix; the sequence is KFHFTSNHH. A helical membrane pass occupies residues 233–256; that stretch reads FGFEAAAWYWHFVDVVWLFLYVSI. At 257–261 the chain is on the mitochondrial intermembrane side; that stretch reads YWWGS.

It belongs to the cytochrome c oxidase subunit 3 family. As to quaternary structure, component of the cytochrome c oxidase (complex IV, CIV), a multisubunit enzyme composed of 14 subunits. The complex is composed of a catalytic core of 3 subunits MT-CO1, MT-CO2 and MT-CO3, encoded in the mitochondrial DNA, and 11 supernumerary subunits COX4I, COX5A, COX5B, COX6A, COX6B, COX6C, COX7A, COX7B, COX7C, COX8 and NDUFA4, which are encoded in the nuclear genome. The complex exists as a monomer or a dimer and forms supercomplexes (SCs) in the inner mitochondrial membrane with NADH-ubiquinone oxidoreductase (complex I, CI) and ubiquinol-cytochrome c oxidoreductase (cytochrome b-c1 complex, complex III, CIII), resulting in different assemblies (supercomplex SCI(1)III(2)IV(1) and megacomplex MCI(2)III(2)IV(2)).

The protein localises to the mitochondrion inner membrane. The enzyme catalyses 4 Fe(II)-[cytochrome c] + O2 + 8 H(+)(in) = 4 Fe(III)-[cytochrome c] + 2 H2O + 4 H(+)(out). Functionally, component of the cytochrome c oxidase, the last enzyme in the mitochondrial electron transport chain which drives oxidative phosphorylation. The respiratory chain contains 3 multisubunit complexes succinate dehydrogenase (complex II, CII), ubiquinol-cytochrome c oxidoreductase (cytochrome b-c1 complex, complex III, CIII) and cytochrome c oxidase (complex IV, CIV), that cooperate to transfer electrons derived from NADH and succinate to molecular oxygen, creating an electrochemical gradient over the inner membrane that drives transmembrane transport and the ATP synthase. Cytochrome c oxidase is the component of the respiratory chain that catalyzes the reduction of oxygen to water. Electrons originating from reduced cytochrome c in the intermembrane space (IMS) are transferred via the dinuclear copper A center (CU(A)) of subunit 2 and heme A of subunit 1 to the active site in subunit 1, a binuclear center (BNC) formed by heme A3 and copper B (CU(B)). The BNC reduces molecular oxygen to 2 water molecules using 4 electrons from cytochrome c in the IMS and 4 protons from the mitochondrial matrix. In Dugong dugon (Dugong), this protein is Cytochrome c oxidase subunit 3 (MT-CO3).